We begin with the raw amino-acid sequence, 636 residues long: Threonine--tRNA ligase (636 aa).

Residues 1–63 form the TGS domain; it reads MSSISIALPD…KDDSRVEIIT (63 aa). The tract at residues 243–534 is catalytic; the sequence is DHRRLGRELD…LIEHYAGNFP (292 aa). Zn(2+) is bound by residues Cys-335, His-386, and His-511.

This sequence belongs to the class-II aminoacyl-tRNA synthetase family. As to quaternary structure, homodimer. The cofactor is Zn(2+).

The protein localises to the cytoplasm. It carries out the reaction tRNA(Thr) + L-threonine + ATP = L-threonyl-tRNA(Thr) + AMP + diphosphate + H(+). In terms of biological role, catalyzes the attachment of threonine to tRNA(Thr) in a two-step reaction: L-threonine is first activated by ATP to form Thr-AMP and then transferred to the acceptor end of tRNA(Thr). Also edits incorrectly charged L-seryl-tRNA(Thr). This Pelobacter propionicus (strain DSM 2379 / NBRC 103807 / OttBd1) protein is Threonine--tRNA ligase.